Here is a 319-residue protein sequence, read N- to C-terminus: Protein sprouty homolog 1 (319 aa).

At M1 the chain carries N-acetylmethionine. The interval 54–160 (TEGPSVVKRP…ERAIRTQPKQ (107 aa)) is disordered. Residues 69 to 79 (PRQEKHERTHE) show a composition bias toward basic and acidic residues. Residues 112–131 (SRSTSTGSAASSGSNSSASS) are compositionally biased toward low complexity. The SPR domain maps to 183 to 295 (QCGKCKCGEC…CYDWIHRPGC (113 aa)).

The protein belongs to the sprouty family. Forms heterodimers with SPRY2. Interacts with TESK1. Interacts with CAV1 (via C-terminus).

The protein localises to the cytoplasm. It is found in the membrane. Its function is as follows. Inhibits fibroblast growth factor (FGF)-induced retinal lens fiber differentiation, probably by inhibiting FGF-mediated phosphorylation of ERK1/2. Inhibits TGFB-induced epithelial-to-mesenchymal transition in lens epithelial cells. This chain is Protein sprouty homolog 1 (SPRY1), found in Cervus elaphus (Red deer).